Here is a 550-residue protein sequence, read N- to C-terminus: 65-kDa microtubule-associated protein 5 (550 aa).

Coiled-coil stretches lie at residues 46 to 174 (NKKV…QKVN) and 288 to 310 (IREA…KELV). Residues 471-531 (QFREQKRLQG…PGRSVTSGGK (61 aa)) are disordered. The segment covering 502 to 511 (QSLNTDNVTK) has biased composition (polar residues).

The protein belongs to the MAP65/ASE1 family. Forms a dimer. Binds to MT, mostly with coaligned MT, both between parallel or antiparallel, forming thick bundles. Bundles polymerized MT via the formation of 25-nm crossbridges with cortical MT.

The protein resides in the nucleus. It localises to the cytoplasm. Its subcellular location is the cytoskeleton. It is found in the spindle. The protein localises to the phragmoplast. The protein resides in the cell cortex. It localises to the cell junction. Its subcellular location is the plasmodesma. Functionally, microtubule-associated protein that bundle and stabilize adjacent microtubules (MT) of the cell cortex. Confers MT resistance to the drug oryzalin. Promotes the formation of a planar network of antiparallel microtubules. In Arabidopsis thaliana (Mouse-ear cress), this protein is 65-kDa microtubule-associated protein 5 (MAP65-5).